The chain runs to 166 residues: NAD(P)H-quinone oxidoreductase subunit I, chloroplastic (166 aa).

4Fe-4S ferredoxin-type domains are found at residues 55–84 and 95–124; these read GRIH…VDWK and LNYS…MTEE. 8 residues coordinate [4Fe-4S] cluster: C64, C67, C70, C74, C104, C107, C110, and C114.

This sequence belongs to the complex I 23 kDa subunit family. In terms of assembly, NDH is composed of at least 16 different subunits, 5 of which are encoded in the nucleus. [4Fe-4S] cluster is required as a cofactor.

The protein localises to the plastid. It is found in the chloroplast thylakoid membrane. It carries out the reaction a plastoquinone + NADH + (n+1) H(+)(in) = a plastoquinol + NAD(+) + n H(+)(out). The catalysed reaction is a plastoquinone + NADPH + (n+1) H(+)(in) = a plastoquinol + NADP(+) + n H(+)(out). NDH shuttles electrons from NAD(P)H:plastoquinone, via FMN and iron-sulfur (Fe-S) centers, to quinones in the photosynthetic chain and possibly in a chloroplast respiratory chain. The immediate electron acceptor for the enzyme in this species is believed to be plastoquinone. Couples the redox reaction to proton translocation, and thus conserves the redox energy in a proton gradient. The chain is NAD(P)H-quinone oxidoreductase subunit I, chloroplastic from Lactuca sativa (Garden lettuce).